The sequence spans 938 residues: Isoleucine--tRNA ligase (938 aa).

Positions 58–68 (PYANGSIHIGH) match the 'HIGH' region motif. An N6-acetyllysine modification is found at Lys183. Position 561 (Glu561) interacts with L-isoleucyl-5'-AMP. The 'KMSKS' region signature appears at 602–606 (KMSKS). Lys605 contacts ATP. 4 residues coordinate Zn(2+): Cys901, Cys904, Cys921, and Cys924.

Belongs to the class-I aminoacyl-tRNA synthetase family. IleS type 1 subfamily. Monomer. The cofactor is Zn(2+).

The protein localises to the cytoplasm. The catalysed reaction is tRNA(Ile) + L-isoleucine + ATP = L-isoleucyl-tRNA(Ile) + AMP + diphosphate. Its function is as follows. Catalyzes the attachment of isoleucine to tRNA(Ile). As IleRS can inadvertently accommodate and process structurally similar amino acids such as valine, to avoid such errors it has two additional distinct tRNA(Ile)-dependent editing activities. One activity is designated as 'pretransfer' editing and involves the hydrolysis of activated Val-AMP. The other activity is designated 'posttransfer' editing and involves deacylation of mischarged Val-tRNA(Ile). This Shigella dysenteriae serotype 1 (strain Sd197) protein is Isoleucine--tRNA ligase.